The following is a 100-amino-acid chain: Small ribosomal subunit protein uS14c (100 aa).

Belongs to the universal ribosomal protein uS14 family. In terms of assembly, part of the 30S ribosomal subunit.

Its subcellular location is the plastid. It is found in the chloroplast. Its function is as follows. Binds 16S rRNA, required for the assembly of 30S particles. This Glycine max (Soybean) protein is Small ribosomal subunit protein uS14c.